The following is a 447-amino-acid chain: UPF0210 protein LEUM_1180 (447 aa).

The protein belongs to the UPF0210 family. In terms of assembly, homodimer.

This chain is UPF0210 protein LEUM_1180, found in Leuconostoc mesenteroides subsp. mesenteroides (strain ATCC 8293 / DSM 20343 / BCRC 11652 / CCM 1803 / JCM 6124 / NCDO 523 / NBRC 100496 / NCIMB 8023 / NCTC 12954 / NRRL B-1118 / 37Y).